The chain runs to 387 residues: S-adenosylmethionine synthase (387 aa).

Residue histidine 15 coordinates ATP. Aspartate 17 contributes to the Mg(2+) binding site. Glutamate 43 is a K(+) binding site. Residues glutamate 56 and glutamine 99 each coordinate L-methionine. Positions 99 to 109 (QSPDIAQGVNR) are flexible loop. ATP-binding positions include 166–168 (DAK), 232–233 (RF), aspartate 241, 247–248 (RK), alanine 264, and lysine 268. Aspartate 241 provides a ligand contact to L-methionine. Lysine 272 is an L-methionine binding site.

This sequence belongs to the AdoMet synthase family. Homotetramer; dimer of dimers. It depends on Mg(2+) as a cofactor. The cofactor is K(+).

It localises to the cytoplasm. It carries out the reaction L-methionine + ATP + H2O = S-adenosyl-L-methionine + phosphate + diphosphate. It participates in amino-acid biosynthesis; S-adenosyl-L-methionine biosynthesis; S-adenosyl-L-methionine from L-methionine: step 1/1. In terms of biological role, catalyzes the formation of S-adenosylmethionine (AdoMet) from methionine and ATP. The overall synthetic reaction is composed of two sequential steps, AdoMet formation and the subsequent tripolyphosphate hydrolysis which occurs prior to release of AdoMet from the enzyme. This Nitrosomonas europaea (strain ATCC 19718 / CIP 103999 / KCTC 2705 / NBRC 14298) protein is S-adenosylmethionine synthase.